The sequence spans 311 residues: Aspartate carbamoyltransferase catalytic subunit (311 aa).

Carbamoyl phosphate is bound by residues Arg55 and Thr56. Lys84 provides a ligand contact to L-aspartate. Carbamoyl phosphate contacts are provided by Arg105, His133, and Gln136. Positions 166 and 229 each coordinate L-aspartate. Carbamoyl phosphate contacts are provided by Leu268 and Pro269.

The protein belongs to the aspartate/ornithine carbamoyltransferase superfamily. ATCase family. In terms of assembly, heterododecamer (2C3:3R2) of six catalytic PyrB chains organized as two trimers (C3), and six regulatory PyrI chains organized as three dimers (R2).

The catalysed reaction is carbamoyl phosphate + L-aspartate = N-carbamoyl-L-aspartate + phosphate + H(+). It functions in the pathway pyrimidine metabolism; UMP biosynthesis via de novo pathway; (S)-dihydroorotate from bicarbonate: step 2/3. Functionally, catalyzes the condensation of carbamoyl phosphate and aspartate to form carbamoyl aspartate and inorganic phosphate, the committed step in the de novo pyrimidine nucleotide biosynthesis pathway. The chain is Aspartate carbamoyltransferase catalytic subunit from Alkaliphilus metalliredigens (strain QYMF).